Consider the following 137-residue polypeptide: Sporulation-specific cell division protein SsgB (137 aa).

The protein belongs to the SsgA family. Interacts with SsgA. Interacts with FtsZ (via N-terminus).

The protein resides in the cell septum. In terms of biological role, involved in sporulation-specific cell division. Required for early stages of sporulation. Important in the process of growth cessation prior to sporulation-specific cell division. Recruits cell division protein FtsZ to the future septum sites and tethers the contractile ring structure (Z ring) to the cytoplasmic membrane during sporulation. Stimulates polymerization and filament length of FtsZ in vitro. This chain is Sporulation-specific cell division protein SsgB, found in Streptomyces coelicolor (strain ATCC BAA-471 / A3(2) / M145).